The following is a 223-amino-acid chain: Deoxyribose-phosphate aldolase (223 aa).

Catalysis depends on Asp-89, which acts as the Proton donor/acceptor. Lys-152 acts as the Schiff-base intermediate with acetaldehyde in catalysis. The Proton donor/acceptor role is filled by Lys-181.

Belongs to the DeoC/FbaB aldolase family. DeoC type 1 subfamily.

Its subcellular location is the cytoplasm. It catalyses the reaction 2-deoxy-D-ribose 5-phosphate = D-glyceraldehyde 3-phosphate + acetaldehyde. Its pathway is carbohydrate degradation; 2-deoxy-D-ribose 1-phosphate degradation; D-glyceraldehyde 3-phosphate and acetaldehyde from 2-deoxy-alpha-D-ribose 1-phosphate: step 2/2. Functionally, catalyzes a reversible aldol reaction between acetaldehyde and D-glyceraldehyde 3-phosphate to generate 2-deoxy-D-ribose 5-phosphate. The polypeptide is Deoxyribose-phosphate aldolase (Bacillus cereus (strain ATCC 10987 / NRS 248)).